The primary structure comprises 659 residues: Acetyl-coenzyme A synthetase (659 aa).

A disordered region spans residues 1–35; it reads MATEQTKGQSSESISSVLSERRKFPPPEAFSSQSH. CoA contacts are provided by residues 205–208, Thr323, and Asn347; that span reads RRGS. ATP contacts are provided by residues 399–401, 423–428, Asp512, and Arg527; these read GEP and DTWWQT. Ser535 contacts CoA. Position 538 (Arg538) interacts with ATP. The Mg(2+) site is built by Val549, His551, and Val554. Residue Lys621 is modified to N6-acetyllysine.

Belongs to the ATP-dependent AMP-binding enzyme family. Mg(2+) is required as a cofactor. Acetylated. Deacetylation by the SIR2-homolog deacetylase activates the enzyme.

The catalysed reaction is acetate + ATP + CoA = acetyl-CoA + AMP + diphosphate. In terms of biological role, catalyzes the conversion of acetate into acetyl-CoA (AcCoA), an essential intermediate at the junction of anabolic and catabolic pathways. AcsA undergoes a two-step reaction. In the first half reaction, AcsA combines acetate with ATP to form acetyl-adenylate (AcAMP) intermediate. In the second half reaction, it can then transfer the acetyl group from AcAMP to the sulfhydryl group of CoA, forming the product AcCoA. The chain is Acetyl-coenzyme A synthetase from Chlorobaculum tepidum (strain ATCC 49652 / DSM 12025 / NBRC 103806 / TLS) (Chlorobium tepidum).